Reading from the N-terminus, the 354-residue chain is NADH-quinone oxidoreductase subunit H (354 aa).

Helical transmembrane passes span 12-32, 62-82, 89-109, 124-144, 162-182, 203-223, 239-259, 263-283, 291-311, and 326-346; these read LLGG…LIAP, PWGL…EIIL, GLFL…WVVV, LLFL…AGWA, VSYE…SGTL, FLSW…ISGL, EIVA…FFLA, NMIL…LPPI, IPGW…FLWV, and LGWK…GLWI.

Belongs to the complex I subunit 1 family. NDH-1 is composed of 14 different subunits. Subunits NuoA, H, J, K, L, M, N constitute the membrane sector of the complex.

It is found in the cell inner membrane. It carries out the reaction a quinone + NADH + 5 H(+)(in) = a quinol + NAD(+) + 4 H(+)(out). Functionally, NDH-1 shuttles electrons from NADH, via FMN and iron-sulfur (Fe-S) centers, to quinones in the respiratory chain. The immediate electron acceptor for the enzyme in this species is believed to be ubiquinone. Couples the redox reaction to proton translocation (for every two electrons transferred, four hydrogen ions are translocated across the cytoplasmic membrane), and thus conserves the redox energy in a proton gradient. This subunit may bind ubiquinone. The chain is NADH-quinone oxidoreductase subunit H from Methylibium petroleiphilum (strain ATCC BAA-1232 / LMG 22953 / PM1).